The sequence spans 594 residues: DEAD-box ATP-dependent RNA helicase 25 (594 aa).

Disordered stretches follow at residues 56–80 (RSGG…EEGL) and 92–121 (GVRE…VDGS). The Q motif motif lies at 126-154 (TRFDQCTISPLSLKAVKDAGYERMTQVQE). The 184-residue stretch at 157 to 340 (LPVILQGKDV…HIAMKKNYKF (184 aa)) folds into the Helicase ATP-binding domain. 170 to 177 (AKTGTGKT) contributes to the ATP binding site. The short motif at 288 to 291 (DEAD) is the DEAD box element. Positions 370-520 (ILYDVLKKHV…SVDSSTQTIV (151 aa)) constitute a Helicase C-terminal domain.

This sequence belongs to the DEAD box helicase family.

It catalyses the reaction ATP + H2O = ADP + phosphate + H(+). In Oryza sativa subsp. japonica (Rice), this protein is DEAD-box ATP-dependent RNA helicase 25.